A 273-amino-acid polypeptide reads, in one-letter code: NADPH-dependent 7-cyano-7-deazaguanine reductase (273 aa).

81-83 is a substrate binding site; that stretch reads VES. 83–84 contacts NADPH; the sequence is SK. C179 (thioimide intermediate) is an active-site residue. The active-site Proton donor is D186. 218–219 is a substrate binding site; the sequence is AE. Residue 247–248 coordinates NADPH; that stretch reads RG.

It belongs to the GTP cyclohydrolase I family. QueF type 2 subfamily. As to quaternary structure, homodimer.

It is found in the cytoplasm. It carries out the reaction 7-aminomethyl-7-carbaguanine + 2 NADP(+) = 7-cyano-7-deazaguanine + 2 NADPH + 3 H(+). It functions in the pathway tRNA modification; tRNA-queuosine biosynthesis. Catalyzes the NADPH-dependent reduction of 7-cyano-7-deazaguanine (preQ0) to 7-aminomethyl-7-deazaguanine (preQ1). The polypeptide is NADPH-dependent 7-cyano-7-deazaguanine reductase (Rickettsia massiliae (strain Mtu5)).